Here is a 102-residue protein sequence, read N- to C-terminus: Protein ORF28 (102 aa).

The chain crosses the membrane as a helical span at residues 28–48; that stretch reads VIGLITVLFLLVIGACVYCCI.

Its subcellular location is the host membrane. This chain is Protein ORF28 (ORF28), found in Homo sapiens (Human).